We begin with the raw amino-acid sequence, 212 residues long: Vesicle transport protein SFT2C (212 aa).

Residues Met-1–Gly-78 are Cytoplasmic-facing. Residues Leu-79 to Leu-99 form a helical membrane-spanning segment. Topologically, residues Leu-100–Lys-104 are lumenal. Residues Phe-105 to Gly-125 form a helical membrane-spanning segment. The Cytoplasmic portion of the chain corresponds to Gly-126–Ser-142. A helical transmembrane segment spans residues Thr-143–Leu-165. Residues Thr-166–Val-174 are Lumenal-facing. A helical membrane pass occupies residues Ala-175–Leu-197. The Cytoplasmic segment spans residues Gly-198 to Val-212.

This sequence belongs to the SFT2 family.

It is found in the membrane. Functionally, may be involved in fusion of retrograde transport vesicles derived from an endocytic compartment with the Golgi complex. This is Vesicle transport protein SFT2C from Mus musculus (Mouse).